The sequence spans 323 residues: Delta(7)-sterol 5(6)-desaturase ERG3B (323 aa).

The next 3 membrane-spanning stretches (helical) occupy residues 67–87 (ASILMIAGFGAAFIYVISAAL), 112–132 (IQSSFFAIPIIDLLTLPFFLG), and 150–170 (SWLAISTILYMVFNDLGIYWI). The region spanning 157–285 (ILYMVFNDLG…YFTWADNYWG (129 aa)) is the Fatty acid hydroxylase domain. Residues 171 to 175 (HRLEH) carry the Histidine box-1 motif. The Histidine box-2 signature appears at 184 to 188 (HKPHH). Residues 262–266 (HTLHH) carry the Histidine box-3 motif.

It belongs to the sterol desaturase family.

Its subcellular location is the endoplasmic reticulum membrane. It catalyses the reaction episterol + 2 Fe(II)-[cytochrome b5] + O2 + 2 H(+) = 5-dehydroepisterol + 2 Fe(III)-[cytochrome b5] + 2 H2O. The protein operates within steroid metabolism; ergosterol biosynthesis. Functionally, C-5 sterol desaturase; part of the third module of ergosterol biosynthesis pathway that includes the late steps of the pathway. ERG3A and ERG3BB catalyze the introduction of a C-5 double bond in the B ring to produce 5-dehydroepisterol. The third module or late pathway involves the ergosterol synthesis itself through consecutive reactions that mainly occur in the endoplasmic reticulum (ER) membrane. Firstly, the squalene synthase ERG9 catalyzes the condensation of 2 farnesyl pyrophosphate moieties to form squalene, which is the precursor of all steroids. Squalene synthase is crucial for balancing the incorporation of farnesyl diphosphate (FPP) into sterol and nonsterol isoprene synthesis. Secondly, squalene is converted into lanosterol by the consecutive action of the squalene epoxidase ERG1 and the lanosterol synthase ERG7. Then, the delta(24)-sterol C-methyltransferase ERG6 methylates lanosterol at C-24 to produce eburicol. Eburicol is the substrate of the sterol 14-alpha demethylase encoded by CYP51A, CYP51B and CYP51C, to yield 4,4,24-trimethyl ergosta-8,14,24(28)-trienol. CYP51B encodes the enzyme primarily responsible for sterol 14-alpha-demethylation, and plays an essential role in ascospore formation. CYP51A encodes an additional sterol 14-alpha-demethylase, induced on ergosterol depletion and responsible for the intrinsic variation in azole sensitivity. The third CYP51 isoform, CYP51C, does not encode a sterol 14-alpha-demethylase, but is required for full virulence on host wheat ears. The C-14 reductase ERG24 then reduces the C14=C15 double bond which leads to 4,4-dimethylfecosterol. A sequence of further demethylations at C-4, involving the C-4 demethylation complex containing the C-4 methylsterol oxidases ERG25, the sterol-4-alpha-carboxylate 3-dehydrogenase ERG26 and the 3-keto-steroid reductase ERG27, leads to the production of fecosterol via 4-methylfecosterol. ERG28 has a role as a scaffold to help anchor ERG25, ERG26 and ERG27 to the endoplasmic reticulum. The C-8 sterol isomerase ERG2 then catalyzes the reaction which results in unsaturation at C-7 in the B ring of sterols and thus converts fecosterol to episterol. The sterol-C5-desaturases ERG3A and ERG3BB then catalyze the introduction of a C-5 double bond in the B ring to produce 5-dehydroepisterol. The C-22 sterol desaturases ERG5A and ERG5B further convert 5-dehydroepisterol into ergosta-5,7,22,24(28)-tetraen-3beta-ol by forming the C-22(23) double bond in the sterol side chain. Finally, ergosta-5,7,22,24(28)-tetraen-3beta-ol is substrate of the C-24(28) sterol reductase ERG4 to produce ergosterol. The sequence is that of Delta(7)-sterol 5(6)-desaturase ERG3B from Gibberella zeae (strain ATCC MYA-4620 / CBS 123657 / FGSC 9075 / NRRL 31084 / PH-1) (Wheat head blight fungus).